The following is a 292-amino-acid chain: NAD kinase (292 aa).

The active-site Proton acceptor is the aspartate 73. Residues 73 to 74, 147 to 148, histidine 158, arginine 175, aspartate 177, 188 to 193, and glutamine 248 contribute to the NAD(+) site; these read DG, NE, and TGYSLS.

The protein belongs to the NAD kinase family. Requires a divalent metal cation as cofactor.

It is found in the cytoplasm. It catalyses the reaction NAD(+) + ATP = ADP + NADP(+) + H(+). Functionally, involved in the regulation of the intracellular balance of NAD and NADP, and is a key enzyme in the biosynthesis of NADP. Catalyzes specifically the phosphorylation on 2'-hydroxyl of the adenosine moiety of NAD to yield NADP. The chain is NAD kinase from Buchnera aphidicola subsp. Baizongia pistaciae (strain Bp).